The primary structure comprises 562 residues: Dihydroxy-acid dehydratase 1 (562 aa).

Asp-80 contacts Mg(2+). Cys-121 is a binding site for [2Fe-2S] cluster. 2 residues coordinate Mg(2+): Asp-122 and Lys-123. Lys-123 is modified (N6-carboxylysine). Position 194 (Cys-194) interacts with [2Fe-2S] cluster. Mg(2+) is bound at residue Glu-446. Catalysis depends on Ser-472, which acts as the Proton acceptor.

This sequence belongs to the IlvD/Edd family. As to quaternary structure, homodimer. [2Fe-2S] cluster is required as a cofactor. It depends on Mg(2+) as a cofactor.

The enzyme catalyses (2R)-2,3-dihydroxy-3-methylbutanoate = 3-methyl-2-oxobutanoate + H2O. The catalysed reaction is (2R,3R)-2,3-dihydroxy-3-methylpentanoate = (S)-3-methyl-2-oxopentanoate + H2O. It participates in amino-acid biosynthesis; L-isoleucine biosynthesis; L-isoleucine from 2-oxobutanoate: step 3/4. It functions in the pathway amino-acid biosynthesis; L-valine biosynthesis; L-valine from pyruvate: step 3/4. In terms of biological role, functions in the biosynthesis of branched-chain amino acids. Catalyzes the dehydration of (2R,3R)-2,3-dihydroxy-3-methylpentanoate (2,3-dihydroxy-3-methylvalerate) into 2-oxo-3-methylpentanoate (2-oxo-3-methylvalerate) and of (2R)-2,3-dihydroxy-3-methylbutanoate (2,3-dihydroxyisovalerate) into 2-oxo-3-methylbutanoate (2-oxoisovalerate), the penultimate precursor to L-isoleucine and L-valine, respectively. This chain is Dihydroxy-acid dehydratase 1, found in Staphylococcus saprophyticus subsp. saprophyticus (strain ATCC 15305 / DSM 20229 / NCIMB 8711 / NCTC 7292 / S-41).